The following is a 62-amino-acid chain: Sperm protamine P1 (62 aa).

Residues 1-62 (MARYRHSRSR…RYSRRRRRRY (62 aa)) are disordered.

The protein belongs to the protamine P1 family. As to expression, testis.

It is found in the nucleus. Its subcellular location is the chromosome. Protamines substitute for histones in the chromatin of sperm during the haploid phase of spermatogenesis. They compact sperm DNA into a highly condensed, stable and inactive complex. The protein is Sperm protamine P1 (PRM1) of Notamacropus eugenii (Tammar wallaby).